Here is a 198-residue protein sequence, read N- to C-terminus: Glycerol-3-phosphate acyltransferase (198 aa).

Helical transmembrane passes span Thr4–Gly24, Leu71–Gly91, Leu113–Phe133, and Val147–Leu167.

The protein belongs to the PlsY family. Probably interacts with PlsX.

It localises to the cell membrane. The enzyme catalyses an acyl phosphate + sn-glycerol 3-phosphate = a 1-acyl-sn-glycero-3-phosphate + phosphate. It functions in the pathway lipid metabolism; phospholipid metabolism. In terms of biological role, catalyzes the transfer of an acyl group from acyl-phosphate (acyl-PO(4)) to glycerol-3-phosphate (G3P) to form lysophosphatidic acid (LPA). This enzyme utilizes acyl-phosphate as fatty acyl donor, but not acyl-CoA or acyl-ACP. The polypeptide is Glycerol-3-phosphate acyltransferase (Bacillus cereus (strain G9842)).